The following is a 37-amino-acid chain: Cytochrome b6-f complex subunit 5 (37 aa).

A helical transmembrane segment spans residues 5–25 (LLSGIILGLIPITICGLFFTA).

Belongs to the PetG family. In terms of assembly, the 4 large subunits of the cytochrome b6-f complex are cytochrome b6, subunit IV (17 kDa polypeptide, PetD), cytochrome f and the Rieske protein, while the 4 small subunits are PetG, PetL, PetM and PetN. The complex functions as a dimer.

It is found in the plastid. It localises to the chloroplast thylakoid membrane. Its function is as follows. Component of the cytochrome b6-f complex, which mediates electron transfer between photosystem II (PSII) and photosystem I (PSI), cyclic electron flow around PSI, and state transitions. PetG is required for either the stability or assembly of the cytochrome b6-f complex. The protein is Cytochrome b6-f complex subunit 5 of Euglena gracilis.